The sequence spans 217 residues: MTTNLFNIFDPSTTIFNLEMNWISTLLIILFMPNFLWILPNRMNWLLFKMFNMLNNEMLMLYKMKKTKSPAFLFISLFMFILLNNFFSLFPYIFSSSSHMVFSVTLAIPFWMFFIILSTCKNTKNMIAHLIPLNTPIYLAPLMTIIETMSIIIRPMSLSIRLTANLIAGHLLMTLLNFNSLMIIIIFIQMFMMIFELCVALIQSYVFSILSSLYSSE.

6 helical membrane-spanning segments follow: residues 20-40 (MNWI…WILP), 70-90 (PAFL…FSLF), 100-120 (MVFS…LSTC), 126-146 (MIAH…MTII), 166-188 (LIAG…IIFI), and 193-215 (MIFE…SLYS).

This sequence belongs to the ATPase A chain family. Component of the ATP synthase complex composed at least of ATP5F1A/subunit alpha, ATP5F1B/subunit beta, ATP5MC1/subunit c (homooctomer), MT-ATP6/subunit a, MT-ATP8/subunit 8, ATP5ME/subunit e, ATP5MF/subunit f, ATP5MG/subunit g, ATP5MK/subunit k, ATP5MJ/subunit j, ATP5F1C/subunit gamma, ATP5F1D/subunit delta, ATP5F1E/subunit epsilon, ATP5PF/subunit F6, ATP5PB/subunit b, ATP5PD/subunit d, ATP5PO/subunit OSCP. ATP synthase complex consists of a soluble F(1) head domain (subunits alpha(3) and beta(3)) - the catalytic core - and a membrane F(0) domain - the membrane proton channel (subunits c, a, 8, e, f, g, k and j). These two domains are linked by a central stalk (subunits gamma, delta, and epsilon) rotating inside the F1 region and a stationary peripheral stalk (subunits F6, b, d, and OSCP). Interacts with DNAJC30; interaction is direct.

It localises to the mitochondrion inner membrane. It catalyses the reaction H(+)(in) = H(+)(out). Its function is as follows. Subunit a, of the mitochondrial membrane ATP synthase complex (F(1)F(0) ATP synthase or Complex V) that produces ATP from ADP in the presence of a proton gradient across the membrane which is generated by electron transport complexes of the respiratory chain. ATP synthase complex consist of a soluble F(1) head domain - the catalytic core - and a membrane F(1) domain - the membrane proton channel. These two domains are linked by a central stalk rotating inside the F(1) region and a stationary peripheral stalk. During catalysis, ATP synthesis in the catalytic domain of F(1) is coupled via a rotary mechanism of the central stalk subunits to proton translocation. With the subunit c (ATP5MC1), forms the proton-conducting channel in the F(0) domain, that contains two crucial half-channels (inlet and outlet) that facilitate proton movement from the mitochondrial intermembrane space (IMS) into the matrix. Protons are taken up via the inlet half-channel and released through the outlet half-channel, following a Grotthuss mechanism. The protein is ATP synthase F(0) complex subunit a of Rhopalosiphum padi (Bird cherry-oat aphid).